Reading from the N-terminus, the 277-residue chain is NADPH-dependent 7-cyano-7-deazaguanine reductase (277 aa).

Residue 83 to 85 (IES) coordinates substrate. NADPH is bound at residue 85–86 (SK). Catalysis depends on cysteine 184, which acts as the Thioimide intermediate. The active-site Proton donor is the aspartate 191. 223–224 (HE) is a binding site for substrate. Position 252 to 253 (252 to 253 (RG)) interacts with NADPH.

The protein belongs to the GTP cyclohydrolase I family. QueF type 2 subfamily. In terms of assembly, homodimer.

The protein localises to the cytoplasm. It catalyses the reaction 7-aminomethyl-7-carbaguanine + 2 NADP(+) = 7-cyano-7-deazaguanine + 2 NADPH + 3 H(+). It participates in tRNA modification; tRNA-queuosine biosynthesis. Functionally, catalyzes the NADPH-dependent reduction of 7-cyano-7-deazaguanine (preQ0) to 7-aminomethyl-7-deazaguanine (preQ1). The polypeptide is NADPH-dependent 7-cyano-7-deazaguanine reductase (Cupriavidus pinatubonensis (strain JMP 134 / LMG 1197) (Cupriavidus necator (strain JMP 134))).